The sequence spans 94 residues: Pyrimidine/purine nucleoside phosphorylase (94 aa).

This sequence belongs to the nucleoside phosphorylase PpnP family.

It carries out the reaction a purine D-ribonucleoside + phosphate = a purine nucleobase + alpha-D-ribose 1-phosphate. The enzyme catalyses adenosine + phosphate = alpha-D-ribose 1-phosphate + adenine. It catalyses the reaction cytidine + phosphate = cytosine + alpha-D-ribose 1-phosphate. The catalysed reaction is guanosine + phosphate = alpha-D-ribose 1-phosphate + guanine. It carries out the reaction inosine + phosphate = alpha-D-ribose 1-phosphate + hypoxanthine. The enzyme catalyses thymidine + phosphate = 2-deoxy-alpha-D-ribose 1-phosphate + thymine. It catalyses the reaction uridine + phosphate = alpha-D-ribose 1-phosphate + uracil. The catalysed reaction is xanthosine + phosphate = alpha-D-ribose 1-phosphate + xanthine. Functionally, catalyzes the phosphorolysis of diverse nucleosides, yielding D-ribose 1-phosphate and the respective free bases. Can use uridine, adenosine, guanosine, cytidine, thymidine, inosine and xanthosine as substrates. Also catalyzes the reverse reactions. The polypeptide is Pyrimidine/purine nucleoside phosphorylase (Shigella dysenteriae serotype 1 (strain Sd197)).